Consider the following 384-residue polypeptide: F-box/kelch-repeat protein At3g44120 (384 aa).

Residues 1 to 46 (MTLPELPKDLVEEILCFVPATSLKRLRSSCKEWNRLFKDDKRFARK) form the F-box domain. Kelch repeat units lie at residues 156 to 202 (CNKS…RECF), 264 to 314 (SVLV…FLLD), and 352 to 384 (GVQT…KRDY).

This is F-box/kelch-repeat protein At3g44120 from Arabidopsis thaliana (Mouse-ear cress).